The chain runs to 113 residues: Large ribosomal subunit protein uL22 (113 aa).

The protein belongs to the universal ribosomal protein uL22 family. In terms of assembly, part of the 50S ribosomal subunit.

Functionally, this protein binds specifically to 23S rRNA; its binding is stimulated by other ribosomal proteins, e.g. L4, L17, and L20. It is important during the early stages of 50S assembly. It makes multiple contacts with different domains of the 23S rRNA in the assembled 50S subunit and ribosome. Its function is as follows. The globular domain of the protein is located near the polypeptide exit tunnel on the outside of the subunit, while an extended beta-hairpin is found that lines the wall of the exit tunnel in the center of the 70S ribosome. The polypeptide is Large ribosomal subunit protein uL22 (Geobacillus sp. (strain WCH70)).